The following is a 581-amino-acid chain: Leucine-rich repeat-containing protein 15 (581 aa).

The first 21 residues, 1–21 (MPLKHYLLLLVGCQAWGAGLA), serve as a signal peptide directing secretion. Positions 22–53 (YHGCPSECTCSRASQVECTGARIVAVPTPLPW) constitute an LRRNT domain. The Extracellular segment spans residues 22 to 538 (YHGCPSECTC…VWGMTQAQSG (517 aa)). LRR repeat units follow at residues 54-75 (NAMS…PFLN), 78-99 (ALIA…AFRN), 102-123 (SLRY…LFQG), 126-147 (SLES…HFSQ), 150-171 (NLKE…AFDH), 174-195 (GLTK…VFQH), 198-219 (NLQV…TFDG), 222-243 (NLQE…LFHN), 246-267 (NLQR…VFMQ), 270-291 (QLNR…IFGP), 294-315 (NLRE…VFSN), 318-339 (QLQV…AFNG), 342-363 (ELRE…VFRM), 366-387 (NLQN…IFAN), and 390-411 (GLMA…IFDH). The N-linked (GlcNAc...) asparagine glycan is linked to Asn75. An N-linked (GlcNAc...) asparagine glycan is attached at Asn369. Positions 423 to 475 (NPWRCDSDILPLRNWLLLNQPRLGTDTVPVCFSPANVRGQSLIIINVNVAVPS) constitute an LRRCT domain. Residues 489 to 509 (WYPDTPSYPDTTSVSSTTELT) form a disordered region. Over residues 499–509 (TTSVSSTTELT) the composition is skewed to low complexity. The chain crosses the membrane as a helical span at residues 539–559 (LAIAAIVIGIVALACSLAACV). The Cytoplasmic segment spans residues 560 to 581 (GCCCCKKRSQAVLMQMKAPNEC).

As to quaternary structure, (Microbial infection) Interacts with human coronavirus SARS-CoV-2 spike protein (via RBD domain); the interaction is direct and sequesters virions at the cell surface. In terms of assembly, (Microbial infection) Interacts with human coronavirus SARS-CoV-2 spike protein (via RBD domain); the interaction is direct. As to expression, expressed in brain and placenta. Expressed in lung fibroblasts. Expressed in chodrocytes.

Its subcellular location is the cell membrane. Its function is as follows. (Microbial infection) Modulates the ability of SARS-CoV-2 to infect host cells through interaction with the spike protein. Does not act as a SARS-CoV-2 entry receptor but sequesters virions and antagonizes in trans SARS-CoV-2 infection of ACE2(+) cells when expressed on nearby cells. The protein is Leucine-rich repeat-containing protein 15 (LRRC15) of Homo sapiens (Human).